The sequence spans 312 residues: Tyrosine recombinase XerC (312 aa).

The Core-binding (CB) domain maps to 10–101 (PDLQAARESW…GIRSLLRFLE (92 aa)). The region spanning 122 to 306 (SLPKPLTASD…DTARLLEIYE (185 aa)) is the Tyr recombinase domain. Catalysis depends on residues Arg-165, Lys-190, His-258, Arg-261, and His-284. The O-(3'-phospho-DNA)-tyrosine intermediate role is filled by Tyr-293.

This sequence belongs to the 'phage' integrase family. XerC subfamily. In terms of assembly, forms a cyclic heterotetrameric complex composed of two molecules of XerC and two molecules of XerD.

Its subcellular location is the cytoplasm. In terms of biological role, site-specific tyrosine recombinase, which acts by catalyzing the cutting and rejoining of the recombining DNA molecules. The XerC-XerD complex is essential to convert dimers of the bacterial chromosome into monomers to permit their segregation at cell division. It also contributes to the segregational stability of plasmids. The sequence is that of Tyrosine recombinase XerC from Mesorhizobium japonicum (strain LMG 29417 / CECT 9101 / MAFF 303099) (Mesorhizobium loti (strain MAFF 303099)).